The chain runs to 283 residues: 1-acyl-sn-glycerol-3-phosphate acyltransferase alpha (283 aa).

The first 26 residues, 1 to 26 (MDLWPGAWMLLLLLFLLLLFLLPTLW), serve as a signal peptide directing secretion. At 27–37 (FCSPSAKYFFK) the chain is on the lumenal side. The helical transmembrane segment at 38 to 58 (MAFYNGWILFLAVLAIPVCAV) threads the bilayer. Residues 59–127 (RGRNVENMKI…PGRCVPIAKR (69 aa)) are Cytoplasmic-facing. The HXXXXD motif signature appears at 104–109 (HQSSLD). A helical transmembrane segment spans residues 128–148 (ELLWAGSAGLACWLAGVIFID). Topologically, residues 149 to 283 (RKRTGDAISV…DYLKKPGGGG (135 aa)) are lumenal. The EGTR motif signature appears at 178 to 181 (EGTR).

This sequence belongs to the 1-acyl-sn-glycerol-3-phosphate acyltransferase family. As to expression, widely expressed. Expressed in adipose tissue and at high levels in testis and pancreas. Expressed at lower levels in tissues such as heart, brain, placenta, kidney, lung, spleen, thymus, prostate, ovary, intestine, colon, leukocyte and liver.

The protein localises to the endoplasmic reticulum membrane. It catalyses the reaction a 1-acyl-sn-glycero-3-phosphate + an acyl-CoA = a 1,2-diacyl-sn-glycero-3-phosphate + CoA. The enzyme catalyses 1-(9Z-octadecenoyl)-sn-glycero-3-phosphate + (9Z)-octadecenoyl-CoA = 1,2-di-(9Z-octadecenoyl)-sn-glycero-3-phosphate + CoA. It carries out the reaction 1-(9Z-octadecenoyl)-sn-glycero-3-phosphate + hexadecanoyl-CoA = 1-(9Z)-octadecenoyl-2-hexadecanoyl-sn-glycero-3-phosphate + CoA. The catalysed reaction is heptadecanoyl-CoA + 1-(9Z-octadecenoyl)-sn-glycero-3-phosphate = 1-(9Z)-octadecenoyl-2-heptadecanoyl-sn-glycero-3-phosphate + CoA. It catalyses the reaction 1-(9Z-octadecenoyl)-sn-glycero-3-phosphate + octadecanoyl-CoA = 1-(9Z-octadecenoyl)-2-octadecanoyl-sn-glycero-3-phosphate + CoA. The enzyme catalyses 1-(9Z-octadecenoyl)-sn-glycero-3-phosphate + (9Z,12Z)-octadecadienoyl-CoA = 1-(9Z)-octadecenoyl-2-(9Z,12Z)-octadecadienoyl-sn-glycero-3-phosphate + CoA. It carries out the reaction 1-(9Z-octadecenoyl)-sn-glycero-3-phosphate + tetradecanoyl-CoA = 1-(9Z)-octadecenoyl-2-tetradecanoyl-sn-glycero-3-phosphate + CoA. The catalysed reaction is pentadecanoyl-CoA + 1-(9Z-octadecenoyl)-sn-glycero-3-phosphate = 1-(9Z)-octadecenoyl-2-pentadecanoyl-sn-glycero-3-phosphate + CoA. It catalyses the reaction 1-hexadecanoyl-sn-glycero-3-phosphate + (9Z)-octadecenoyl-CoA = 1-hexadecanoyl-2-(9Z-octadecenoyl)-sn-glycero-3-phosphate + CoA. The enzyme catalyses 1-(9Z,12Z,15Z)-octadecatrienoyl-sn-glycero-3-phosphate + (9Z)-octadecenoyl-CoA = 1-(9Z,12Z,15Z)-octadecatrienoyl-2-(9Z)-octadecenoyl-sn-glycero-3-phosphate + CoA. It carries out the reaction 1-(6Z,9Z,12Z-octadecatrienoyl)-sn-glycero-3-phosphate + (9Z)-octadecenoyl-CoA = (6Z,9Z,12Z)-octadecatrienoyl-2-(9Z)-octadecenoyl-sn-glycero-3-phosphate + CoA. The catalysed reaction is 1-eicosanoyl-sn-glycero-3-phosphate + (9Z)-octadecenoyl-CoA = 1-eicosanoyl-2-(9Z)-octadecenoyl-sn-glycero-3-phosphate + CoA. It catalyses the reaction 1-tetradecanoyl-sn-glycerol 3-phosphate + (9Z)-octadecenoyl-CoA = 1-tetradecanoyl-2-(9Z)-octadecenoyl-sn-glycero-3-phosphate + CoA. The enzyme catalyses 1-(9Z-octadecenoyl)-sn-glycero-3-phosphate + (5Z,8Z,11Z,14Z)-eicosatetraenoyl-CoA = 1-(9Z)-octadecenoyl-2-(5Z,8Z,11Z,14Z)-eicosatetraenoyl-sn-glycero-3-phosphate + CoA. It carries out the reaction 1-(9Z-octadecenoyl)-sn-glycero-3-phosphate + dodecanoyl-CoA = 1-(9Z)-octadecenoyl-2-dodecanoyl-sn-glycero-3-phosphate + CoA. The catalysed reaction is (6Z)-octadecenoyl-CoA + 1-(9Z-octadecenoyl)-sn-glycero-3-phosphate = 1-(9Z)-octadecenoyl-2-(6Z)-octadecenoyl-sn-glycero-3-phosphate + CoA. It catalyses the reaction (11Z)-octadecenoyl-CoA + 1-(9Z-octadecenoyl)-sn-glycero-3-phosphate = 1-(9Z)-octadecenoyl-2-(11Z)-octadecenoyl-sn-glycero-3-phosphate + CoA. The enzyme catalyses (9Z)-hexadecenoyl-CoA + 1-(9Z-octadecenoyl)-sn-glycero-3-phosphate = 1-(9Z-octadecenoyl)-2-(9Z-hexadecenoyl)-sn-glycero-3-phosphate + CoA. It participates in phospholipid metabolism; CDP-diacylglycerol biosynthesis; CDP-diacylglycerol from sn-glycerol 3-phosphate: step 2/3. Functionally, converts 1-acyl-sn-glycerol-3-phosphate (lysophosphatidic acid or LPA) into 1,2-diacyl-sn-glycerol-3-phosphate (phosphatidic acid or PA) by incorporating an acyl moiety at the sn-2 position of the glycerol backbone. This chain is 1-acyl-sn-glycerol-3-phosphate acyltransferase alpha (AGPAT1), found in Homo sapiens (Human).